A 693-amino-acid polypeptide reads, in one-letter code: Heat shock protein homolog SSE2 (693 aa).

The interval 653–693 is disordered; it reads LRANQETSKMNDIAEKLAEQRRARAASDDSDDNNDENMDLD. Positions 664–679 are enriched in basic and acidic residues; the sequence is DIAEKLAEQRRARAAS. Over residues 680-693 the composition is skewed to acidic residues; that stretch reads DDSDDNNDENMDLD.

It belongs to the heat shock protein 70 family.

Its function is as follows. Has a calcium-dependent calmodulin-binding activity. In Saccharomyces cerevisiae (strain ATCC 204508 / S288c) (Baker's yeast), this protein is Heat shock protein homolog SSE2 (SSE2).